The primary structure comprises 311 residues: Meteorin-like protein (311 aa).

A compositionally biased stretch (low complexity) spans 1–13 (MRGAARAAWGRAG). The disordered stretch occupies residues 1 to 24 (MRGAARAAWGRAGQPWPRPPAPGP). Residues 1–45 (MRGAARAAWGRAGQPWPRPPAPGPPPPPLPLLLLLLAGLLGGAGA) form the signal peptide. 5 disulfides stabilise this stretch: Cys52–Cys75, Cys107–Cys143, Cys188–Cys260, Cys191–Cys284, and Cys201–Cys306.

This sequence belongs to the meteorin family. Highly expressed in the skeletal muscle, in subcutaneous adipose tissue, epididymal white adipose tissue depots and heart. Also expressed in brown adipose tissues and kidney.

Its subcellular location is the secreted. Hormone induced following exercise or cold exposure that promotes energy expenditure. Induced either in the skeletal muscle after exercise or in adipose tissue following cold exposure and is present in the circulation. Able to stimulate energy expenditure associated with the browning of the white fat depots and improves glucose tolerance. Does not promote an increase in a thermogenic gene program via direct action on adipocytes, but acts by stimulating several immune cell subtypes to enter the adipose tissue and activate their prothermogenic actions. Stimulates an eosinophil-dependent increase in IL4 expression and promotes alternative activation of adipose tissue macrophages, which are required for the increased expression of the thermogenic and anti-inflammatory gene programs in fat. Required for some cold-induced thermogenic responses, suggesting a role in metabolic adaptations to cold temperatures. The chain is Meteorin-like protein (METRNL) from Homo sapiens (Human).